The primary structure comprises 149 residues: Peptide deformylase (149 aa).

2 residues coordinate Fe cation: Cys92 and His134. Residue Glu135 is part of the active site. His138 contacts Fe cation.

It belongs to the polypeptide deformylase family. Fe(2+) serves as cofactor.

The catalysed reaction is N-terminal N-formyl-L-methionyl-[peptide] + H2O = N-terminal L-methionyl-[peptide] + formate. In terms of biological role, removes the formyl group from the N-terminal Met of newly synthesized proteins. Requires at least a dipeptide for an efficient rate of reaction. N-terminal L-methionine is a prerequisite for activity but the enzyme has broad specificity at other positions. The polypeptide is Peptide deformylase (Buchnera aphidicola subsp. Cinara cedri (strain Cc)).